A 245-amino-acid polypeptide reads, in one-letter code: Protein crossbronx (245 aa).

Residues His-20–Ala-177 form the UBC core domain.

Belongs to the ubiquitin-conjugating enzyme family. FTS subfamily.

This chain is Protein crossbronx (cbx), found in Drosophila mojavensis (Fruit fly).